The chain runs to 350 residues: 3-dehydroquinate synthase (350 aa).

Residues 106 to 110 (GVVGD), 130 to 131 (TS), Lys143, and Lys152 each bind NAD(+). Glu185, His246, and His263 together coordinate Zn(2+).

Belongs to the sugar phosphate cyclases superfamily. Dehydroquinate synthase family. It depends on Co(2+) as a cofactor. Zn(2+) is required as a cofactor. NAD(+) serves as cofactor.

The protein resides in the cytoplasm. The enzyme catalyses 7-phospho-2-dehydro-3-deoxy-D-arabino-heptonate = 3-dehydroquinate + phosphate. Its pathway is metabolic intermediate biosynthesis; chorismate biosynthesis; chorismate from D-erythrose 4-phosphate and phosphoenolpyruvate: step 2/7. Functionally, catalyzes the conversion of 3-deoxy-D-arabino-heptulosonate 7-phosphate (DAHP) to dehydroquinate (DHQ). The chain is 3-dehydroquinate synthase from Clostridium perfringens (strain SM101 / Type A).